The sequence spans 938 residues: Isoleucine--tRNA ligase (938 aa).

The short motif at 58–68 (PYANGSIHIGH) is the 'HIGH' region element. K183 carries the post-translational modification N6-acetyllysine. E561 serves as a coordination point for L-isoleucyl-5'-AMP. The 'KMSKS' region motif lies at 602 to 606 (KMSKS). K605 contributes to the ATP binding site. C901, C904, C921, and C924 together coordinate Zn(2+).

The protein belongs to the class-I aminoacyl-tRNA synthetase family. IleS type 1 subfamily. In terms of assembly, monomer. Requires Zn(2+) as cofactor.

The protein localises to the cytoplasm. The catalysed reaction is tRNA(Ile) + L-isoleucine + ATP = L-isoleucyl-tRNA(Ile) + AMP + diphosphate. Catalyzes the attachment of isoleucine to tRNA(Ile). As IleRS can inadvertently accommodate and process structurally similar amino acids such as valine, to avoid such errors it has two additional distinct tRNA(Ile)-dependent editing activities. One activity is designated as 'pretransfer' editing and involves the hydrolysis of activated Val-AMP. The other activity is designated 'posttransfer' editing and involves deacylation of mischarged Val-tRNA(Ile). In Shigella dysenteriae serotype 1 (strain Sd197), this protein is Isoleucine--tRNA ligase.